Consider the following 5233-residue polypeptide: E3 ubiquitin-protein ligase highwire (5233 aa).

Residues 197-230 form a disordered region; the sequence is VVGGPGLPAEKRPRRDSANSDADSDTEEPTEREP. The span at 205–214 shows a compositional bias: basic and acidic residues; it reads AEKRPRRDSA. Ser-213 and Ser-216 each carry phosphoserine. 3 RCC1 repeats span residues 615-666, 669-724, and 768-818; these read NGRV…ALLV, DGTV…FVTK, and KGQL…DKRL. The interval 680 to 700 is disordered; it reads RGEDGDSSKNRRQPKAVKPKK. A compositionally biased stretch (basic residues) spans 689–700; that stretch reads NRRQPKAVKPKK. Residues 900–950 are disordered; the sequence is TELKPPPSDVQQRQQRSKTLIMRRKERKGELETGAAGGGAATPTDLDKDPP. The span at 908 to 917 shows a compositional bias: polar residues; that stretch reads DVQQRQQRSK. RCC1 repeat units lie at residues 931–983, 984–1033, and 1035–1084; these read ETGA…VLTL, AGEV…LLTS, and GMVY…TVAP. Disordered stretches follow at residues 1051-1109 and 1287-1327; these read LPSD…EMPP and AAAA…PPQL. Residues 1092–1103 show a composition bias toward polar residues; the sequence is RSQSPANVQPSG. Positions 1287-1302 are enriched in low complexity; it reads AAAAAVAAPGTPVSAG. A PHR domain 1 region spans residues 1436-1587; sequence NRFDNFGGGW…GQIPAILYRL (152 aa). Positions 1681-1718 are disordered; sequence SSTSVATGGGSNAAHGSGVVTTAKSVQSKPNKDKNTPR. Residues 1699–1709 are compositionally biased toward polar residues; the sequence is VVTTAKSVQSK. The PHR domain 2 stretch occupies residues 2014 to 2169; it reads ARFARCDVSR…GQLPCILYYS (156 aa). Disordered stretches follow at residues 2329 to 2353 and 2580 to 2604; these read SADL…VPIN and NGAG…NTHQ. The span at 2336–2350 shows a compositional bias: low complexity; sequence QSQSVSQSQSQSQSV. A required for interaction with Rae1 region spans residues 2885 to 4082; sequence AEVSAPGPNL…FVSSLNPTGG (1198 aa). Residues 2906–3000 form a Filamin repeat; that stretch reads WGGMAPPPRI…LEEVYRVDVK (95 aa). 6 disordered regions span residues 3005-3024, 3117-3210, 3277-3333, 3348-3378, 3551-3587, and 3901-3936; these read PPPT…SKLR, KGVG…EPEQ, GGQD…ASET, TTTG…PMGP, PRLL…DLGR, and ASLA…APPV. Basic and acidic residues predominate over residues 3176–3191; that stretch reads KHADLAEREAQVQEER. The segment covering 3192–3210 has biased composition (acidic residues); it reads EKEEEQVDDEDADDREPEQ. The span at 3282–3292 shows a compositional bias: polar residues; the sequence is PRGNGNRSQQE. Residues 3348 to 3371 show a composition bias toward low complexity; it reads TTTGQGEQQSELQLATTSTASSAS. Over residues 3917–3932 the composition is skewed to low complexity; it reads QHHQQQQMNLQLQQHQ. A DOC domain is found at 4195–4374; that stretch reads HNQVHSVATG…KHQPHLRLSH (180 aa). Disordered regions lie at residues 4633-4655 and 4680-4702; these read ASTG…GAVL and LRSR…ALPP. A compositionally biased stretch (gly residues) spans 4638 to 4652; sequence SGSGGVSGSSSGNGG. Residues Cys-4991, Cys-4994, Cys-5009, His-5011, His-5014, Cys-5017, Cys-5038, Cys-5041, Cys-5101, and Cys-5104 each contribute to the Zn(2+) site. An RING-type; atypical zinc finger spans residues 4991–5042; the sequence is CMICFVEALSCAPSIHLECGHVFHYHCCKAVLEKRWSGPRITFGFSLCPICK. The tandem cysteine domain stretch occupies residues 5096-5231; the sequence is YAYYVCFKCQ…LGCGVCRNAQ (136 aa). Residue Cys-5115 is part of the active site. The Zn(2+) site is built by Cys-5130, Cys-5133, Cys-5142, His-5145, Cys-5154, Cys-5157, and Cys-5158. Residue Cys-5165 is part of the active site. 7 residues coordinate Zn(2+): Cys-5172, Cys-5175, Cys-5193, Cys-5207, His-5213, Cys-5224, and Cys-5227.

The protein belongs to the RING-Cys relay (RCR) family. As to quaternary structure, component of an E3 ubiquitin ligase complex composed of hiw, Rae1 and Fsn. Interacts with Rae1; the interaction with Rae1 may protect hiw from autophagy-mediated degradation. Express throughout the nervous system. Stage 13 embryos show expression in the central nervous system (CNS) at the longitudinal axon tracts around which the synaptic neuropil forms. Expression outside the CNS starts at stage 16 in presynaptic terminals at the periactive zone which surround the active zone. Expression at neuromuscular junctions (NMJ) and in the CNS is also seen in third instar larvae (at protein level).

The protein resides in the synapse. Its subcellular location is the cell projection. It is found in the axon. The catalysed reaction is [E2 ubiquitin-conjugating enzyme]-S-ubiquitinyl-L-cysteine + [acceptor protein]-L-threonine = [E2 ubiquitin-conjugating enzyme]-L-cysteine + [acceptor protein]-3-O-ubiquitinyl-L-threonine.. Its pathway is protein modification; protein ubiquitination. In terms of biological role, atypical E3 ubiquitin-protein ligase which specifically mediates ubiquitination of threonine and serine residues on target proteins, instead of ubiquitinating lysine residues. Shows esterification activity towards both threonine and serine, with a preference for threonine, and acts via two essential catalytic cysteine residues that relay ubiquitin to its substrate via thioester intermediates. Required in the presynaptic motoneuron to down-regulate the levels of wnd and restrain synaptic terminal growth at the neuromuscular junction (NMJ) together with Rae1 and Fsn. This is E3 ubiquitin-protein ligase highwire from Drosophila melanogaster (Fruit fly).